A 164-amino-acid polypeptide reads, in one-letter code: Peptidyl-prolyl cis-trans isomerase A (164 aa).

M1 bears the N-acetylmethionine mark. V2 bears the N-acetylvaline; in Peptidyl-prolyl cis-trans isomerase A, N-terminally processed mark. A PPIase cyclophilin-type domain is found at 7-163; it reads FFDIAVDGEP…KKITIADCGQ (157 aa). The residue at position 28 (K28) is an N6-acetyllysine; alternate. K28 is covalently cross-linked (Glycyl lysine isopeptide (Lys-Gly) (interchain with G-Cter in SUMO2); alternate). K28 participates in a covalent cross-link: Glycyl lysine isopeptide (Lys-Gly) (interchain with G-Cter in ubiquitin); alternate. K44 and K76 each carry N6-acetyllysine. A disulfide bridge links C62 with C161. S77 is subject to Phosphoserine. Position 82 is an N6-acetyllysine; alternate (K82). K82 is covalently cross-linked (Glycyl lysine isopeptide (Lys-Gly) (interchain with G-Cter in SUMO2); alternate). T93 carries the phosphothreonine modification. Residue N108 is glycosylated (N-linked (GlcNAc...) asparagine). An N6-acetyllysine mark is found at K125, K131, and K133.

It belongs to the cyclophilin-type PPIase family. PPIase A subfamily. In terms of assembly, interacts with protein phosphatase PPP3CA/calcineurin A. Interacts with isoform 2 of BSG/CD147. Interacts with FOXO1; the interaction promotes FOXO1 dephosphorylation, nuclear accumulation and transcriptional activity. Interacts with integrin ITGA2B:ITGB3; the interaction is ROS and peptidyl-prolyl cis-trans isomerase (PPIase) activity-dependent and is increased in the presence of thrombin. Interacts with MAP3K5. Interacts with TARDBP; the interaction is dependent on the RNA-binding activity of TARDBP and the PPIase activity of PPIA/CYPA and the acetylation of PPIA/CYPA at Lys-125 favors the interaction. Interacts with HNRNPA1, HNRNPA2B1, HNRNPC, RBMX, HNRNPK and HNRNPM. In terms of processing, acetylation at Lys-125 markedly inhibits catalysis of cis to trans isomerization. PPIA acetylation also antagonizes the immunosuppressive effects of cyclosporine by inhibiting the sequential steps of cyclosporine binding and calcineurin inhibition. Acetylation at Lys-125 favors the interaction with TARDBP.

It localises to the cytoplasm. Its subcellular location is the secreted. The protein resides in the nucleus. It catalyses the reaction [protein]-peptidylproline (omega=180) = [protein]-peptidylproline (omega=0). Its activity is regulated as follows. Binds cyclosporin A (CsA). CsA mediates some of its effects via an inhibitory action on PPIase. In terms of biological role, catalyzes the cis-trans isomerization of proline imidic peptide bonds in oligopeptides. Exerts a strong chemotactic effect on leukocytes partly through activation of one of its membrane receptors BSG/CD147, initiating a signaling cascade that culminates in MAPK/ERK activation. Activates endothelial cells (ECs) in a proinflammatory manner by stimulating activation of NF-kappa-B and ERK, JNK and p38 MAP-kinases and by inducing expression of adhesion molecules including SELE and VCAM1. Induces apoptosis in ECs by promoting the FOXO1-dependent expression of CCL2 and BCL2L11 which are involved in EC chemotaxis and apoptosis. In response to oxidative stress, initiates proapoptotic and antiapoptotic signaling in ECs via activation of NF-kappa-B and AKT1 and up-regulation of antiapoptotic protein BCL2. Negatively regulates MAP3K5/ASK1 kinase activity, autophosphorylation and oxidative stress-induced apoptosis mediated by MAP3K5/ASK1. Necessary for the assembly of TARDBP in heterogeneous nuclear ribonucleoprotein (hnRNP) complexes and regulates TARDBP binding to RNA UG repeats and TARDBP-dependent expression of HDAC6, ATG7 and VCP which are involved in clearance of protein aggregates. Plays an important role in platelet activation and aggregation. Regulates calcium mobilization and integrin ITGA2B:ITGB3 bidirectional signaling via increased ROS production as well as by facilitating the interaction between integrin and the cell cytoskeleton. Binds heparan sulfate glycosaminoglycans. The chain is Peptidyl-prolyl cis-trans isomerase A (PPIA) from Bos taurus (Bovine).